Reading from the N-terminus, the 589-residue chain is 3-(3-hydroxy-phenyl)propionate/3-hydroxycinnamic acid hydroxylase (589 aa).

FAD-binding positions include 15–44 (DVLIIGAGPVGLTLANTLGMAGVRVIVAEK) and 283–293 (FRVDRILLAGD).

The protein belongs to the PheA/TfdB FAD monooxygenase family. The cofactor is FAD.

The enzyme catalyses 3-(3-hydroxyphenyl)propanoate + NADH + O2 + H(+) = 3-(2,3-dihydroxyphenyl)propanoate + NAD(+) + H2O. The catalysed reaction is (2E)-3-(3-hydroxyphenyl)prop-2-enoate + NADH + O2 + H(+) = (2E)-3-(2,3-dihydroxyphenyl)prop-2-enoate + NAD(+) + H2O. It participates in aromatic compound metabolism; 3-phenylpropanoate degradation. Catalyzes the insertion of one atom of molecular oxygen into position 2 of the phenyl ring of 3-(3-hydroxyphenyl)propionate (3-HPP) and hydroxycinnamic acid (3HCI). This is 3-(3-hydroxy-phenyl)propionate/3-hydroxycinnamic acid hydroxylase from Comamonas testosteroni (Pseudomonas testosteroni).